We begin with the raw amino-acid sequence, 1386 residues long: X-linked retinitis pigmentosa GTPase regulator homolog (1386 aa).

Disordered regions lie at residues 1–25 (MFFK…TSSE), 37–56 (AGAR…KARR), and 730–760 (MPQM…PEQH). The span at 9 to 25 (SRKTSANSSSDTSTSSE) shows a compositional bias: low complexity. A compositionally biased stretch (basic residues) spans 45 to 56 (SVHRQSGKKARR). RCC1 repeat units lie at residues 737–787 (SKRS…VLSS), 788–838 (SGQL…FICS), 839–891 (DGSL…VLTD), and 893–943 (GRVL…CITE). A disordered region spans residues 972–994 (LKNTEDPSSPSPSTNGSTPRVNL). RCC1 repeat units follow at residues 1034 to 1085 (EGTL…ASTD) and 1087 to 1139 (GSVF…FVQK).

Functionally, could be a guanine-nucleotide releasing factor for glo-1. May play a role in gut granule biogenesis. Regulates axon termination in PLM and ALM neurons. The polypeptide is X-linked retinitis pigmentosa GTPase regulator homolog (glo-4) (Caenorhabditis elegans).